The sequence spans 242 residues: Triosephosphate isomerase (242 aa).

Residue 8–10 participates in substrate binding; sequence NWK. Histidine 91 acts as the Electrophile in catalysis. Glutamate 155 (proton acceptor) is an active-site residue. Substrate contacts are provided by glycine 161 and serine 192.

The protein belongs to the triosephosphate isomerase family. As to quaternary structure, homodimer.

It localises to the cytoplasm. It catalyses the reaction D-glyceraldehyde 3-phosphate = dihydroxyacetone phosphate. It functions in the pathway carbohydrate biosynthesis; gluconeogenesis. The protein operates within carbohydrate degradation; glycolysis; D-glyceraldehyde 3-phosphate from glycerone phosphate: step 1/1. In terms of biological role, involved in the gluconeogenesis. Catalyzes stereospecifically the conversion of dihydroxyacetone phosphate (DHAP) to D-glyceraldehyde-3-phosphate (G3P). This Wolbachia pipientis wMel protein is Triosephosphate isomerase.